We begin with the raw amino-acid sequence, 382 residues long: Mannitol-1-phosphate 5-dehydrogenase (382 aa).

4 to 15 (AVHFGAGNIGRG) contributes to the NAD(+) binding site.

It belongs to the mannitol dehydrogenase family.

The catalysed reaction is D-mannitol 1-phosphate + NAD(+) = beta-D-fructose 6-phosphate + NADH + H(+). The polypeptide is Mannitol-1-phosphate 5-dehydrogenase (Vibrio parahaemolyticus serotype O3:K6 (strain RIMD 2210633)).